A 523-amino-acid chain; its full sequence is Leghemoglobin reductase (523 aa).

Residues 1–30 constitute a mitochondrion transit peptide; it reads MAMASLARRKAYAVVSSSRSSVFLTSLRGF. Residues 66 to 75, Lys-84, Gly-148, and 177 to 179 each bind FAD; these read EKRGTLGGTC and TGS. A disulfide bridge links Cys-75 with Cys-80. Residues 214–221, Glu-237, Val-271, and Gly-306 contribute to the NAD(+) site; that span reads GAGYIGLE. FAD-binding positions include Asp-347 and 353–356; that span reads MLAH. The active-site Proton acceptor is His-479.

It belongs to the class-I pyridine nucleotide-disulfide oxidoreductase family. In terms of assembly, homodimer. It depends on FAD as a cofactor.

It is found in the mitochondrion. The catalysed reaction is 2 Fe(III)-[leghemoglobin] + NADH = 2 Fe(II)-[leghemoglobin] + NAD(+) + H(+). The enzyme catalyses 2 Fe(III)-[leghemoglobin] + NADPH = 2 Fe(II)-[leghemoglobin] + NADP(+) + H(+). In terms of biological role, reduces ferric leghemoglobin (Lb) to ferrous Lb. In Vigna unguiculata (Cowpea), this protein is Leghemoglobin reductase (FLBR).